The primary structure comprises 228 residues: Deoxyribose-phosphate aldolase (228 aa).

Residue Asp-96 is the Proton donor/acceptor of the active site. Lys-157 (schiff-base intermediate with acetaldehyde) is an active-site residue. Lys-185 acts as the Proton donor/acceptor in catalysis.

It belongs to the DeoC/FbaB aldolase family. DeoC type 1 subfamily.

The protein localises to the cytoplasm. The catalysed reaction is 2-deoxy-D-ribose 5-phosphate = D-glyceraldehyde 3-phosphate + acetaldehyde. It participates in carbohydrate degradation; 2-deoxy-D-ribose 1-phosphate degradation; D-glyceraldehyde 3-phosphate and acetaldehyde from 2-deoxy-alpha-D-ribose 1-phosphate: step 2/2. Its function is as follows. Catalyzes a reversible aldol reaction between acetaldehyde and D-glyceraldehyde 3-phosphate to generate 2-deoxy-D-ribose 5-phosphate. The protein is Deoxyribose-phosphate aldolase of Cyanothece sp. (strain PCC 7425 / ATCC 29141).